A 942-amino-acid polypeptide reads, in one-letter code: MORC family CW-type zinc finger protein 3 (942 aa).

Glycyl lysine isopeptide (Lys-Gly) (interchain with G-Cter in SUMO2) cross-links involve residues lysine 191, lysine 205, lysine 280, and lysine 293. The tract at residues 326-353 (AYEKVGCQLKANNMGVGVVGIIECNFLK) is nuclear matrix binding. The segment at 404–454 (KRPDQTWVQCDACLKWRKLPDGIDQLPEKWYCSNNPDPQFRNCEVPEEPED) adopts a CW-type zinc-finger fold. Positions 413, 416, 435, and 446 each coordinate Zn(2+). The segment at 503 to 594 (SFSPVKESVP…ENSTPKPAVD (92 aa)) is RNA binding. Phosphoserine occurs at positions 517 and 543. A Glycyl lysine isopeptide (Lys-Gly) (interchain with G-Cter in SUMO2) cross-link involves residue lysine 558. Residue serine 563 is modified to Phosphoserine. A Glycyl lysine isopeptide (Lys-Gly) (interchain with G-Cter in SUMO1); alternate cross-link involves residue lysine 604. Residue lysine 604 forms a Glycyl lysine isopeptide (Lys-Gly) (interchain with G-Cter in SUMO2); alternate linkage. The interval 623–654 (PKPCVQASSTSTSTSRSDPGITVSTQTDAPGL) is disordered. A compositionally biased stretch (low complexity) spans 630–639 (SSTSTSTSRS). Residues lysine 657, lysine 658, and lysine 743 each participate in a glycyl lysine isopeptide (Lys-Gly) (interchain with G-Cter in SUMO1); alternate cross-link. Glycyl lysine isopeptide (Lys-Gly) (interchain with G-Cter in SUMO2); alternate cross-links involve residues lysine 657, lysine 658, and lysine 743. Residues 696-874 (SHQLQELRSE…KSTGQQAAAD (179 aa)) are a coiled coil. The residue at position 768 (serine 768) is a Phosphoserine. Residue lysine 797 forms a Glycyl lysine isopeptide (Lys-Gly) (interchain with G-Cter in SUMO1); alternate linkage. Lysine 797 is covalently cross-linked (Glycyl lysine isopeptide (Lys-Gly) (interchain with G-Cter in SUMO2); alternate).

As to quaternary structure, homodimer. The sumoylated form interacts with PML (via SUMO-interacting motif). Interacts with TP53. Sumoylation is involved in interaction with PML and localization to PML nuclear bodies.

It localises to the nucleus. The protein localises to the nucleoplasm. It is found in the nucleus matrix. The protein resides in the PML body. Its subcellular location is the chromosome. With respect to regulation, dimerization of the ATPase domain is strictly required for the catalytic activity and binding to double-stranded DNA. Disrupting the interface between ATPase and the CW domains releases autoinhibition since the CW domain sterically impedes binding of the ATPase domain to DNA. Functionally, nuclear matrix protein which forms MORC3-NBs (nuclear bodies) via an ATP-dependent mechanism and plays a role in innate immunity by restricting different viruses through modulation of the IFN response. Mechanistically, possesses a primary antiviral function through a MORC3-regulated element that activates IFNB1, and this function is guarded by a secondary IFN-repressing function. Sumoylated MORC3-NBs associates with PML-NBs and recruits TP53 and SP100, thus regulating TP53 activity. Binds RNA in vitro. Histone methylation reader which binds to non-methylated (H3K4me0), monomethylated (H3K4me1), dimethylated (H3K4me2) and trimethylated (H3K4me3) 'Lys-4' on histone H3. The order of binding preference is H3K4me3 &gt; H3K4me2 &gt; H3K4me1 &gt; H3K4me0. This chain is MORC family CW-type zinc finger protein 3, found in Mus musculus (Mouse).